The following is a 373-amino-acid chain: Forkhead box protein F1 (373 aa).

The interval 1 to 51 (MTAEIQQPPSQPPAQSSPMSAATDKHGGQPSVMESANCATKTKKTNAGIRR) is disordered. Residues 13–22 (PAQSSPMSAA) show a composition bias toward low complexity. The fork-head DNA-binding region spans 54 to 148 (KPPYSYIALI…EEGSFRRRPR (95 aa)). 2 disordered regions span residues 236–255 (GSSGGDYSHHDSGSPLLGGG) and 283–306 (QPLSPCNSAANPLSSSLSSHSLDQ). Residues 286–306 (SPCNSAANPLSSSLSSHSLDQ) show a composition bias toward low complexity.

It is found in the nucleus. Its function is as follows. Probable transcription factor. Required for smooth muscle (visceral mesoderm) differentiation during gut development. Also required for normal proliferation of the lateral plate mesoderm. Acts as a downstream mediator of bmp4-signaling. The chain is Forkhead box protein F1 from Xenopus tropicalis (Western clawed frog).